We begin with the raw amino-acid sequence, 405 residues long: Cytochrome P450 130 (405 aa).

Residues Asp93 and His97 each contribute to the substrate site. Positions 101, 243, 295, 318, 348, 352, and 354 each coordinate heme.

This sequence belongs to the cytochrome P450 family. As to quaternary structure, homodimer. Requires heme as cofactor.

The polypeptide is Cytochrome P450 130 (cyp130) (Mycobacterium tuberculosis (strain CDC 1551 / Oshkosh)).